The primary structure comprises 381 residues: MDSFLPFSRPAIGDEEIQAVEKVLRSGWITTGPQNHQLEQDFCRMFGCKHAVALASATAGMHLTLMALGIGPGDEVITPSQTWVSTINMICLLGAEPIMIDVDRHTLMVDAQTVKKAITSRTKAIIPVHYAGAPCDLDILRGIAQEAGIPLIEDAAHALGTRYKNEWIGEHGTAIFSFHAIKNATCAEGGLIATDNNELVERIRCLKFHGLGIDAFDRQIQGRRPQAEVVEPGYKYNLSDIHAAIAVVQLSKLESMNIRRRQIVARYSTALKDSPLQMLSVPDYEHIHAHHLFMVRVNKDVCGIDRDTLMERLKNKNIGTGLHFRAAHTQKYYRDRYPQLSLPESEWNSVTLCSLPLFPDMSDDDVDRVTDALQEIISEHR.

Lys-182 carries the post-translational modification N6-(pyridoxal phosphate)lysine.

Belongs to the DegT/DnrJ/EryC1 family. ArnB subfamily. In terms of assembly, homodimer. Pyridoxal 5'-phosphate is required as a cofactor.

It carries out the reaction UDP-4-amino-4-deoxy-beta-L-arabinose + 2-oxoglutarate = UDP-beta-L-threo-pentopyranos-4-ulose + L-glutamate. Its pathway is nucleotide-sugar biosynthesis; UDP-4-deoxy-4-formamido-beta-L-arabinose biosynthesis; UDP-4-deoxy-4-formamido-beta-L-arabinose from UDP-alpha-D-glucuronate: step 2/3. It participates in bacterial outer membrane biogenesis; lipopolysaccharide biosynthesis. Catalyzes the conversion of UDP-4-keto-arabinose (UDP-Ara4O) to UDP-4-amino-4-deoxy-L-arabinose (UDP-L-Ara4N). The modified arabinose is attached to lipid A and is required for resistance to polymyxin and cationic antimicrobial peptides. In Photorhabdus laumondii subsp. laumondii (strain DSM 15139 / CIP 105565 / TT01) (Photorhabdus luminescens subsp. laumondii), this protein is UDP-4-amino-4-deoxy-L-arabinose--oxoglutarate aminotransferase.